The primary structure comprises 302 residues: Recombination-associated protein RdgC (302 aa).

The protein belongs to the RdgC family.

The protein resides in the cytoplasm. It is found in the nucleoid. Its function is as follows. May be involved in recombination. The polypeptide is Recombination-associated protein RdgC (Tolumonas auensis (strain DSM 9187 / NBRC 110442 / TA 4)).